The sequence spans 234 residues: Glucosamine-6-phosphate deaminase (234 aa).

Catalysis depends on aspartate 63, which acts as the Proton acceptor; for enolization step. Asparagine 129 serves as the catalytic For ring-opening step. The Proton acceptor; for ring-opening step role is filled by histidine 131. Glutamate 136 (for ring-opening step) is an active-site residue.

Belongs to the glucosamine/galactosamine-6-phosphate isomerase family. NagB subfamily.

It carries out the reaction alpha-D-glucosamine 6-phosphate + H2O = beta-D-fructose 6-phosphate + NH4(+). It participates in amino-sugar metabolism; N-acetylneuraminate degradation; D-fructose 6-phosphate from N-acetylneuraminate: step 5/5. Catalyzes the reversible isomerization-deamination of glucosamine 6-phosphate (GlcN6P) to form fructose 6-phosphate (Fru6P) and ammonium ion. The polypeptide is Glucosamine-6-phosphate deaminase (Listeria welshimeri serovar 6b (strain ATCC 35897 / DSM 20650 / CCUG 15529 / CIP 8149 / NCTC 11857 / SLCC 5334 / V8)).